A 226-amino-acid chain; its full sequence is MLRYHTSKNNFPLASDLRRQRERMVITQLEQRGITNSYVLTAMRNVHRHLFVPEALQSRAYDDYPLPIGYGQTISRPYIVAIMTSLLEPTPGLSVLEIGTGSGYQTAILANIGLEVFSLERVRELYFQTKELFFLLGYRKIRTCLSDGTLGWEEHAPFDRIIVTAGGPNIPLPLLNQLGDPGVMVIPVGQNPREQELMCITKKNNTVTSTVIGNVAFVDLVGDYGW.

Residue Ser75 is part of the active site.

Belongs to the methyltransferase superfamily. L-isoaspartyl/D-aspartyl protein methyltransferase family.

It localises to the cytoplasm. The catalysed reaction is [protein]-L-isoaspartate + S-adenosyl-L-methionine = [protein]-L-isoaspartate alpha-methyl ester + S-adenosyl-L-homocysteine. Catalyzes the methyl esterification of L-isoaspartyl residues in peptides and proteins that result from spontaneous decomposition of normal L-aspartyl and L-asparaginyl residues. It plays a role in the repair and/or degradation of damaged proteins. This is Protein-L-isoaspartate O-methyltransferase from Lawsonia intracellularis (strain PHE/MN1-00).